Consider the following 1480-residue polypeptide: Cystic fibrosis transmembrane conductance regulator (1480 aa).

Topologically, residues 1–77 (MQRSPLEKAS…KLINALRRCF (77 aa)) are cytoplasmic. Residues 78-98 (FWRFMFYGIFLYLGEVTKAVQ) form a helical membrane-spanning segment. Residues 81–365 (FMFYGIFLYL…WAVQTWYDSL (285 aa)) form the ABC transmembrane type-1 1 domain. Over 99 to 122 (PLLLGRIIASYDPDNKEERSIAIY) the chain is Extracellular. Residues 123–146 (LGIGLCLLFIVRTLLLHPAIFGLH) form a helical membrane-spanning segment. Residues 147-195 (HIGMQMRIAMFSLIYKKTLKLSSRVLDKISIGQLVSLLSNNLNKFDEGL) lie on the Cytoplasmic side of the membrane. A helical membrane pass occupies residues 196 to 216 (ALAHFVWIAPLQVALLMGLIW). Topologically, residues 217 to 222 (ELLQAS) are extracellular. The helical transmembrane segment at 223–243 (AFCGLGFLIVLALFQAGLGRM) threads the bilayer. The Cytoplasmic segment spans residues 244 to 298 (MMKYRDQRAGKISERLVITSEMIENIQSVKAYCWEEAMEKMIENLRQTELKLTRK). Residues 299–319 (AAYVRYFNSSAFFFSGFFVVF) traverse the membrane as a helical segment. The Extracellular portion of the chain corresponds to 320 to 339 (LSVLPYALIKGIILRKIFTT). A helical transmembrane segment spans residues 340–358 (ISFCIVLRMAVTRQFPWAV). Residues 359–858 (QTWYDSLGAI…YLRYITVHKS (500 aa)) are Cytoplasmic-facing. ATP-binding positions include Trp-401, Ser-434, 458 to 465 (GSTGAGKT), and Gln-493. The ABC transporter 1 domain maps to 423–646 (NGDDSLFFSN…RPDFSSKLMG (224 aa)). Cys-524 carries the S-palmitoyl cysteine lipid modification. Residues Ser-549 and Ser-660 each carry the phosphoserine modification. Residues 654 to 831 (SAERRNSILT…EEINEEDLKE (178 aa)) are disordered R region. Position 670 is a phosphoserine; by PKA (Ser-670). Ser-686 is subject to Phosphoserine. Lys-688 participates in a covalent cross-link: Glycyl lysine isopeptide (Lys-Gly) (interchain with G-Cter in ubiquitin). Phosphoserine is present on residues Ser-700 and Ser-712. Thr-717 bears the Phosphothreonine mark. Residues Ser-737, Ser-753, Ser-768, Ser-790, Ser-795, and Ser-813 each carry the phosphoserine modification. The helical transmembrane segment at 859-879 (LIFVLIWCLVIFLAEVAASLV) threads the bilayer. Residues 859 to 1155 (LIFVLIWCLV…AVNSSIDVDS (297 aa)) enclose the ABC transmembrane type-1 2 domain. The Extracellular segment spans residues 880–918 (VLWLLGNTPLQDKGNSTHSRNNSYAVIITSTSSYYVFYI). N-linked (GlcNAc...) asparagine glycans are attached at residues Asn-894 and Asn-900. Residues 919–939 (YVGVADTLLAMGFFRGLPLVH) traverse the membrane as a discontinuously helical segment. Topologically, residues 940-990 (TLITVSKILHHKMLHSVLQAPMSTLNTLKAGGILNRFSKDIAILDDLLPLT) are cytoplasmic. A helical membrane pass occupies residues 991-1011 (IFDFIQLLLIVIGAIAVVAVL). Over 1012–1013 (QP) the chain is Extracellular. The helical transmembrane segment at 1014–1034 (YIFVATVPVIVAFIMLRAYFL) threads the bilayer. Over 1035–1095 (QTSQQLKQLE…TANWFLYLST (61 aa)) the chain is Cytoplasmic. The helical transmembrane segment at 1096–1116 (LRWFQMRIEMIFVIFFIAVTF) threads the bilayer. The Extracellular segment spans residues 1117 to 1130 (ISILTTGEGEGRVG). Residues 1131–1151 (IILTLAMNIMSTLQWAVNSSI) traverse the membrane as a helical segment. The Cytoplasmic segment spans residues 1152 to 1480 (DVDSLMRSVS…TEEEVQDTRL (329 aa)). One can recognise an ABC transporter 2 domain in the interval 1210 to 1443 (MTVKDLTAKY…RSLFRQAISP (234 aa)). Residues Tyr-1219 and 1244-1251 (GRTGSGKS) each bind ATP. The tract at residues 1386 to 1480 (RTLKQAFADC…TEEEVQDTRL (95 aa)) is interaction with GORASP2. The S-palmitoyl cysteine moiety is linked to residue Cys-1395. Residues Ser-1444 and Ser-1456 each carry the phosphoserine modification. Residues 1452–1480 (HRNSSKCKSKPQIAALKEETEEEVQDTRL) form a disordered region. Residues 1470 to 1480 (ETEEEVQDTRL) are compositionally biased toward acidic residues. Residues 1478 to 1480 (TRL) carry the PDZ-binding motif.

This sequence belongs to the ABC transporter superfamily. ABCC family. CFTR transporter (TC 3.A.1.202) subfamily. In terms of assembly, monomer; does not require oligomerization for channel activity. May form oligomers in the membrane. Interacts with SLC26A3, SLC26A6 and NHERF1. Interacts with SHANK2. Interacts with MYO6. Interacts (via C-terminus) with GOPC (via PDZ domain); this promotes CFTR internalization and thereby decreases channel activity. Interacts with SLC4A7 through NHERF1. Found in a complex with MYO5B and RAB11A. Interacts with ANO1. Interacts with SLC26A8. Interacts with AHCYL1; the interaction increases CFTR activity. Interacts with CSE1L. The core-glycosylated form interacts with GORASP2 (via PDZ GRASP-type 1 domain) in respone to ER stress. Interacts with MARCHF2; the interaction leads to CFTR ubiqtuitination and degradation. Interacts with ADGRG2. N-glycosylated. Post-translationally, phosphorylated; cAMP treatment promotes phosphorylation and activates the channel. Dephosphorylation decreases the ATPase activity (in vitro). Phosphorylation at PKA sites activates the channel. Phosphorylation at PKC sites enhances the response to phosphorylation by PKA. Phosphorylated by AMPK; this inhibits channel activity. In terms of processing, ubiquitinated, leading to its degradation in the lysosome. Deubiquitination by USP10 in early endosomes enhances its endocytic recycling to the cell membrane. Ubiquitinated by RNF185 during ER stress. Ubiquitinated by MARCHF2.

Its subcellular location is the apical cell membrane. The protein localises to the early endosome membrane. It is found in the cell membrane. It localises to the recycling endosome membrane. The protein resides in the endoplasmic reticulum membrane. Its subcellular location is the nucleus. The catalysed reaction is ATP + H2O + closed Cl(-) channel = ADP + phosphate + open Cl(-) channel.. It catalyses the reaction chloride(in) = chloride(out). The enzyme catalyses hydrogencarbonate(in) = hydrogencarbonate(out). It carries out the reaction ATP + H2O = ADP + phosphate + H(+). In terms of biological role, epithelial ion channel that plays an important role in the regulation of epithelial ion and water transport and fluid homeostasis. Mediates the transport of chloride ions across the cell membrane. Possesses an intrinsic ATPase activity and utilizes ATP to gate its channel; the passive flow of anions through the channel is gated by cycles of ATP binding and hydrolysis by the ATP-binding domains. The ion channel is also permeable to HCO(3)(-); selectivity depends on the extracellular chloride concentration. Exerts its function also by modulating the activity of other ion channels and transporters. Contributes to the regulation of the pH and the ion content of the epithelial fluid layer. Modulates the activity of the epithelial sodium channel (ENaC) complex, in part by regulating the cell surface expression of the ENaC complex. May regulate bicarbonate secretion and salvage in epithelial cells by regulating the transporter SLC4A7. Can inhibit the chloride channel activity of ANO1. Plays a role in the chloride and bicarbonate homeostasis during sperm epididymal maturation and capacitation. The sequence is that of Cystic fibrosis transmembrane conductance regulator from Pan troglodytes (Chimpanzee).